The primary structure comprises 412 residues: MIDIKLLQKDFDYVVKALQKKGVDNALLNNLKDLALKTKQKRQEMEDVTAEQNLLSKEFGRYKKENLDISELQEKINALKTKKQELEDEVRTLEDDLNSIILSVPNMPDENVPFGVDENENVILEVIGEKPTFNFTPKEHWDLSCDWLDFERGVKLAKSRFTAIKGDGARLERALINYMLDFNRQRGFNEWYVPFMANSNTLQGTGQLPKFADDLFKIEGEDLYLIPTAEVSLTNLYNDEIIDKSELPLLLTSYTPCFRKEAGSAGRDTRGLIRQHQFDKVEMVAITSQEQSDEIFEKMVNCASDLLSSLGLCHQKVQLCSGDLGFSAAVTIDLEVWLPGQNKFREISSISNTRDFQARRAKIRYKEDKKNILAHTLNGSSLAVGRTLLAIMENYQQADGSVKIPEVLKKYL.

Thr-228–Glu-230 provides a ligand contact to L-serine. Position 259 to 261 (Arg-259 to Glu-261) interacts with ATP. Position 282 (Glu-282) interacts with L-serine. Residue Glu-346–Ser-349 participates in ATP binding. Position 380 (Ser-380) interacts with L-serine.

This sequence belongs to the class-II aminoacyl-tRNA synthetase family. Type-1 seryl-tRNA synthetase subfamily. In terms of assembly, homodimer. The tRNA molecule binds across the dimer.

It localises to the cytoplasm. It carries out the reaction tRNA(Ser) + L-serine + ATP = L-seryl-tRNA(Ser) + AMP + diphosphate + H(+). It catalyses the reaction tRNA(Sec) + L-serine + ATP = L-seryl-tRNA(Sec) + AMP + diphosphate + H(+). It functions in the pathway aminoacyl-tRNA biosynthesis; selenocysteinyl-tRNA(Sec) biosynthesis; L-seryl-tRNA(Sec) from L-serine and tRNA(Sec): step 1/1. Functionally, catalyzes the attachment of serine to tRNA(Ser). Is also able to aminoacylate tRNA(Sec) with serine, to form the misacylated tRNA L-seryl-tRNA(Sec), which will be further converted into selenocysteinyl-tRNA(Sec). This is Serine--tRNA ligase from Aliarcobacter butzleri (strain RM4018) (Arcobacter butzleri).